The primary structure comprises 160 residues: Phosphopantetheine adenylyltransferase (160 aa).

S9 contributes to the substrate binding site. ATP contacts are provided by residues 9 to 10 (SF) and H17. The substrate site is built by K41, L73, and R87. ATP contacts are provided by residues 88–90 (GLR), E98, and 123–129 (YTFLSSS).

The protein belongs to the bacterial CoaD family. As to quaternary structure, homohexamer. The cofactor is Mg(2+).

The protein localises to the cytoplasm. The catalysed reaction is (R)-4'-phosphopantetheine + ATP + H(+) = 3'-dephospho-CoA + diphosphate. It participates in cofactor biosynthesis; coenzyme A biosynthesis; CoA from (R)-pantothenate: step 4/5. Functionally, reversibly transfers an adenylyl group from ATP to 4'-phosphopantetheine, yielding dephospho-CoA (dPCoA) and pyrophosphate. The polypeptide is Phosphopantetheine adenylyltransferase (Dictyoglomus turgidum (strain DSM 6724 / Z-1310)).